We begin with the raw amino-acid sequence, 498 residues long: 4-aminobutyrate aminotransferase (498 aa).

Pyridoxal 5'-phosphate is bound at residue 164–165 (GS). R222 is a substrate binding site. An N6-(pyridoxal phosphate)lysine modification is found at K356. Pyridoxal 5'-phosphate is bound at residue T381.

This sequence belongs to the class-III pyridoxal-phosphate-dependent aminotransferase family. As to quaternary structure, homodimer. It depends on pyridoxal 5'-phosphate as a cofactor.

The protein localises to the cytoplasm. It catalyses the reaction 4-aminobutanoate + 2-oxoglutarate = succinate semialdehyde + L-glutamate. Its function is as follows. Deaminates gamma-aminobutyric acid (GABA) to succinate-semialdehyde, which in turn is converted to succinate by the succinate semialdehyde dehydrogenase. Required for the degradation of GABA, which is important for utilization of GABA as nitrogen source. The polypeptide is 4-aminobutyrate aminotransferase (gatA) (Emericella nidulans (strain FGSC A4 / ATCC 38163 / CBS 112.46 / NRRL 194 / M139) (Aspergillus nidulans)).